The sequence spans 318 residues: tRNA(Ile)-lysidine synthase (318 aa).

26-31 (SGGADS) is a binding site for ATP.

Belongs to the tRNA(Ile)-lysidine synthase family.

The protein localises to the cytoplasm. It catalyses the reaction cytidine(34) in tRNA(Ile2) + L-lysine + ATP = lysidine(34) in tRNA(Ile2) + AMP + diphosphate + H(+). Ligates lysine onto the cytidine present at position 34 of the AUA codon-specific tRNA(Ile) that contains the anticodon CAU, in an ATP-dependent manner. Cytidine is converted to lysidine, thus changing the amino acid specificity of the tRNA from methionine to isoleucine. This is tRNA(Ile)-lysidine synthase from Nocardia farcinica (strain IFM 10152).